Consider the following 124-residue polypeptide: NADH-quinone oxidoreductase subunit K (124 aa).

Transmembrane regions (helical) follow at residues 28–48 (MEHGLILAAIIFAIGLCGVMV), 52–72 (FLFMLMSLEIMMSAAGLAFIV), and 84–104 (IMFIFILTLAAAEASLGLAIL).

Belongs to the complex I subunit 4L family. As to quaternary structure, NDH-1 is composed of 14 different subunits. Subunits NuoA, H, J, K, L, M, N constitute the membrane sector of the complex.

It localises to the cell inner membrane. The enzyme catalyses a quinone + NADH + 5 H(+)(in) = a quinol + NAD(+) + 4 H(+)(out). Its function is as follows. NDH-1 shuttles electrons from NADH, via FMN and iron-sulfur (Fe-S) centers, to quinones in the respiratory chain. The immediate electron acceptor for the enzyme in this species is believed to be ubiquinone. Couples the redox reaction to proton translocation (for every two electrons transferred, four hydrogen ions are translocated across the cytoplasmic membrane), and thus conserves the redox energy in a proton gradient. The chain is NADH-quinone oxidoreductase subunit K from Psychrobacter sp. (strain PRwf-1).